The chain runs to 379 residues: UDP-4-amino-4-deoxy-L-arabinose--oxoglutarate aminotransferase (379 aa).

Lys-182 is subject to N6-(pyridoxal phosphate)lysine.

Belongs to the DegT/DnrJ/EryC1 family. ArnB subfamily. Homodimer. It depends on pyridoxal 5'-phosphate as a cofactor.

It catalyses the reaction UDP-4-amino-4-deoxy-beta-L-arabinose + 2-oxoglutarate = UDP-beta-L-threo-pentopyranos-4-ulose + L-glutamate. Its pathway is nucleotide-sugar biosynthesis; UDP-4-deoxy-4-formamido-beta-L-arabinose biosynthesis; UDP-4-deoxy-4-formamido-beta-L-arabinose from UDP-alpha-D-glucuronate: step 2/3. The protein operates within bacterial outer membrane biogenesis; lipopolysaccharide biosynthesis. Catalyzes the conversion of UDP-4-keto-arabinose (UDP-Ara4O) to UDP-4-amino-4-deoxy-L-arabinose (UDP-L-Ara4N). The modified arabinose is attached to lipid A and is required for resistance to polymyxin and cationic antimicrobial peptides. This Salmonella paratyphi A (strain ATCC 9150 / SARB42) protein is UDP-4-amino-4-deoxy-L-arabinose--oxoglutarate aminotransferase.